The sequence spans 85 residues: UPF0335 protein BQ12070 (85 aa).

It belongs to the UPF0335 family.

The sequence is that of UPF0335 protein BQ12070 from Bartonella quintana (strain Toulouse) (Rochalimaea quintana).